A 108-amino-acid polypeptide reads, in one-letter code: Succinate dehydrogenase assembly factor 4, mitochondrial (108 aa).

Residues 33-46 (NNNNNNNNNNNNNN) are compositionally biased toward low complexity. Disordered stretches follow at residues 33–59 (NNNN…KENQ) and 79–108 (NPIT…VSDF). The span at 95–108 (RYNDWERNGRVSDF) shows a compositional bias: basic and acidic residues.

It belongs to the SDHAF4 family. Interacts with SdhA in its FAD-bound form.

It localises to the mitochondrion matrix. Functionally, plays an essential role in the assembly of succinate dehydrogenase (SDH), an enzyme complex (also referred to as respiratory complex II) that is a component of both the tricarboxylic acid (TCA) cycle and the mitochondrial electron transport chain, and which couples the oxidation of succinate to fumarate with the reduction of ubiquinone (coenzyme Q) to ubiquinol. Binds to the flavoprotein subunit SdhA in its FAD-bound form, blocking the generation of excess reactive oxygen species (ROS) and facilitating its assembly with the iron-sulfur protein subunit SdhB into the SDH catalytic dimer. The protein is Succinate dehydrogenase assembly factor 4, mitochondrial of Dictyostelium discoideum (Social amoeba).